Reading from the N-terminus, the 420-residue chain is MKYRRIKGTNDIFGEEIWYWRYVEETFRNVCESAGIEEIRTPIFEQTELFVRSVGEESDIVQKEMYTFQDKAGRSITLRPEGTAPVVRAFLENSLIDRGFQQRYYYIGPMFRYEKPQSGRLRQFHQVGFEIIGPESPKADFEVIMLVDTFLRRLGLTKYKIHLNSIGCPVCRKNYREALKEYYGQVLDNLCDDCKRRYETNILRLLDCKVDHEYSLNAPKSVDYLCDSCRAHYKKLKEYLNTFEIEYVEDHTLVRGLDYYTRTVFEVRHEGLGAQSAIAGGGRYDGLFAELGGSSVPALGFAGGIERIILALKAEGIEIPMKNVHLVYIATLGEKAFMDGVRLAGELRKKGLSVDVDIMDRKLSGQLKHASRMGSRYAVIIGDEELEKGIVILRDLETGDQVEIDRDFAADYIAERVSKD.

It belongs to the class-II aminoacyl-tRNA synthetase family. As to quaternary structure, homodimer.

The protein resides in the cytoplasm. The enzyme catalyses tRNA(His) + L-histidine + ATP = L-histidyl-tRNA(His) + AMP + diphosphate + H(+). The chain is Histidine--tRNA ligase from Thermotoga sp. (strain RQ2).